The following is an 81-amino-acid chain: Conotoxin Vc6.13 (81 aa).

An N-terminal signal peptide occupies residues 1 to 19 (MEKLTILLLVAAVLMSIQA). The propeptide occupies 20–44 (LNQEQHQRAKINLLSKRKAPAERWW). 3 disulfides stabilise this stretch: Cys-49–Cys-63, Cys-56–Cys-67, and Cys-62–Cys-72.

The protein belongs to the conotoxin O2 superfamily. Expressed by the venom duct.

Its subcellular location is the secreted. Inhibits voltage-gated ion channels. This chain is Conotoxin Vc6.13, found in Conus victoriae (Queen Victoria cone).